A 257-amino-acid polypeptide reads, in one-letter code: Imidazole glycerol phosphate synthase subunit HisF (257 aa).

Active-site residues include aspartate 11 and aspartate 130.

The protein belongs to the HisA/HisF family. In terms of assembly, heterodimer of HisH and HisF.

It is found in the cytoplasm. The enzyme catalyses 5-[(5-phospho-1-deoxy-D-ribulos-1-ylimino)methylamino]-1-(5-phospho-beta-D-ribosyl)imidazole-4-carboxamide + L-glutamine = D-erythro-1-(imidazol-4-yl)glycerol 3-phosphate + 5-amino-1-(5-phospho-beta-D-ribosyl)imidazole-4-carboxamide + L-glutamate + H(+). It participates in amino-acid biosynthesis; L-histidine biosynthesis; L-histidine from 5-phospho-alpha-D-ribose 1-diphosphate: step 5/9. Its function is as follows. IGPS catalyzes the conversion of PRFAR and glutamine to IGP, AICAR and glutamate. The HisF subunit catalyzes the cyclization activity that produces IGP and AICAR from PRFAR using the ammonia provided by the HisH subunit. In Shewanella baltica (strain OS155 / ATCC BAA-1091), this protein is Imidazole glycerol phosphate synthase subunit HisF.